Reading from the N-terminus, the 532-residue chain is Omega-hydroxyceramide transacylase (532 aa).

The 170-residue stretch at 16 to 185 (ISFSGSGFLS…TGMQPCAFWT (170 aa)) folds into the PNPLA domain. A GXSXG motif is present at residues 51-55 (GTSAG). Residue Ser-53 is the Nucleophile of the active site. Residue Asp-172 is the Proton acceptor of the active site. A DGA/G motif is present at residues 172-174 (DGG). 2 disordered regions span residues 290–457 (PERS…ELGQ) and 489–532 (VTES…SKVQ). A compositionally biased stretch (basic and acidic residues) spans 310-322 (PHKEWVPKGDGRG). Low complexity-rich tracts occupy residues 380–389 (PPSSTPGSSL) and 397–411 (SPLS…SGSP). Over residues 517–532 (GFPRHSGSKKPSSKVQ) the composition is skewed to basic residues.

Expressed in the digestive system. Expressed in the epidermis of skin keratinocytes. Strongly expressed in the granular layer. Expressed in the upper epidermis and eccrine sweat glands of the dermis and in the region of keratin filament bundles, which is more pronounced in upper epidermal layers and in the lower cornified layers.

It localises to the cytoplasm. It catalyses the reaction an N-(omega-hydroxy-ultra-long chain fatty acyl)-sphingoid base + a (9Z,12Z)-octadecadienoyl-containing triacyl-sn-glycerol = an N-[omega-(9Z,12Z-octadecadienoyloxy)-O-ultra-long chain fatty acyl]-sphingoid base + a diacylglycerol. The enzyme catalyses an N-(omega-hydroxy-ultra-long chain fatty acyl)-sphing-4-enine + a (9Z,12Z)-octadecadienoyl-containing triacyl-sn-glycerol = an N-(omega-(9Z,12Z-octadecadienoyloxy)-ultra-long chain fatty acyl)-sphing-4-enine + a diacylglycerol. The catalysed reaction is N-(30-hydroxytriacontanoyl)-sphing-4-enine + 1,2,3-tri-(9Z,12Z)-octadecadienoylglycerol = N-[30-(9Z,12Z-octadecadienoyloxy)-triacontanoyl]-sphing-4-enine + di-(9Z,12Z)-octadecadienoylglycerol. It carries out the reaction N-(28-hydroxyoctacosanoyl)-sphing-4-enine + a (9Z,12Z)-octadecadienoyl-containing triacyl-sn-glycerol = N-(28-(9Z,12Z-octadecadienoyloxy)-octacosanoyl)-sphing-4-enine + a diacylglycerol. It catalyses the reaction N-(32-hydroxydotriacontanoyl)-sphing-4-enine + a (9Z,12Z)-octadecadienoyl-containing triacyl-sn-glycerol = N-(32-(9Z,12Z-octadecadienoyloxy)-dotricontanoyl)-sphing-4-enine + a diacylglycerol. The enzyme catalyses N-(32-hydroxydotriacontenoyl)-sphing-4-enine + a (9Z,12Z)-octadecadienoyl-containing triacyl-sn-glycerol = an N-(32-(9Z,12Z-octadecadienoyloxy)-dotriacontenoyl)-sphing-4-enine + a diacylglycerol. The catalysed reaction is an N-(34-hydroxytetratriacontenoyl)-sphing-4-enine + a (9Z,12Z)-octadecadienoyl-containing triacyl-sn-glycerol = an N-(34-(9Z,12Z-octadecadienoyloxy)-tetratriacontenoyl)-sphing-4-enine + a diacylglycerol. It carries out the reaction an N-(34-hydroxytetratriacontadienoyl)-sphing-4-enine + a (9Z,12Z)-octadecadienoyl-containing triacyl-sn-glycerol = an N-(34-(9Z,12Z-octadecadienoyloxy)-tetratriacontadienoyl)-sphing-4-enine + a diacylglycerol. It catalyses the reaction an N-(36-hydroxyhexatriacontenoyl)-sphing-4-enine + a (9Z,12Z)-octadecadienoyl-containing triacyl-sn-glycerol = an N-(36-(9Z,12Z-octadecadienoyloxy)-hexatriacontenoyl)-sphing-4-enine + a diacylglycerol. The enzyme catalyses an N-(36-hydroxyhexatriacontadienoyl)-sphing-4-enine + a (9Z,12Z)-octadecadienoyl-containing triacyl-sn-glycerol = an N-(36-(9Z,12Z-octadecadienoyloxy)-hexatriacontadienoyl)-sphing-4-enine + a diacylglycerol. The catalysed reaction is an N-(38-hydroxyoctatriacontenoyl)-sphing-4-enine + a (9Z,12Z)-octadecadienoyl-containing triacyl-sn-glycerol = an N-(38-(9Z,12Z-octadecadienoyloxy)-octatriacontenoyl)-sphing-4-enine + a diacylglycerol. Functionally, omega-hydroxyceramide transacylase involved in the synthesis of omega-O-acylceramides (esterified omega-hydroxyacyl-sphingosine; EOS), which are extremely hydrophobic lipids involved in skin barrier formation. Catalyzes the last step of the synthesis of omega-O-acylceramides by transferring linoleic acid from triglycerides to an omega-hydroxyceramide. Omega-O-acylceramides, are required for the biogenesis of lipid lamellae in the stratum corneum and the formation of the cornified lipid envelope which are essential for the epidermis barrier function. These lipids also play a role in keratinocyte differentiation. May also act on omega-hydroxylated ultra-long chain fatty acids (omega-OH ULCFA) and acylglucosylceramides (GlcEOS). The polypeptide is Omega-hydroxyceramide transacylase (Homo sapiens (Human)).